Reading from the N-terminus, the 216-residue chain is MOB kinase activator-like 1 homolog C (216 aa).

Zn(2+)-binding residues include C78, C83, H160, and H165.

The protein belongs to the MOB1/phocein family.

This chain is MOB kinase activator-like 1 homolog C (mobC), found in Dictyostelium discoideum (Social amoeba).